Here is a 174-residue protein sequence, read N- to C-terminus: Inosine/xanthosine triphosphatase (174 aa).

A Mg(2+)-binding site is contributed by D68. 68–69 is a substrate binding site; sequence DA.

It belongs to the YjjX NTPase family. Homodimer. Mg(2+) serves as cofactor. The cofactor is Mn(2+).

The enzyme catalyses XTP + H2O = XDP + phosphate + H(+). It catalyses the reaction ITP + H2O = IDP + phosphate + H(+). Phosphatase that hydrolyzes non-canonical purine nucleotides such as XTP and ITP to their respective diphosphate derivatives. Probably excludes non-canonical purines from DNA/RNA precursor pool, thus preventing their incorporation into DNA/RNA and avoiding chromosomal lesions. This Photobacterium profundum (strain SS9) protein is Inosine/xanthosine triphosphatase.